Here is a 357-residue protein sequence, read N- to C-terminus: UDP-N-acetylglucosamine--N-acetylmuramyl-(pentapeptide) pyrophosphoryl-undecaprenol N-acetylglucosamine transferase (357 aa).

UDP-N-acetyl-alpha-D-glucosamine-binding positions include 10–12 (TGG), Asn-124, Ser-189, Ile-244, and Gln-289.

This sequence belongs to the glycosyltransferase 28 family. MurG subfamily.

The protein localises to the cell membrane. The catalysed reaction is Mur2Ac(oyl-L-Ala-gamma-D-Glu-L-Lys-D-Ala-D-Ala)-di-trans,octa-cis-undecaprenyl diphosphate + UDP-N-acetyl-alpha-D-glucosamine = beta-D-GlcNAc-(1-&gt;4)-Mur2Ac(oyl-L-Ala-gamma-D-Glu-L-Lys-D-Ala-D-Ala)-di-trans,octa-cis-undecaprenyl diphosphate + UDP + H(+). The protein operates within cell wall biogenesis; peptidoglycan biosynthesis. Its function is as follows. Cell wall formation. Catalyzes the transfer of a GlcNAc subunit on undecaprenyl-pyrophosphoryl-MurNAc-pentapeptide (lipid intermediate I) to form undecaprenyl-pyrophosphoryl-MurNAc-(pentapeptide)GlcNAc (lipid intermediate II). The sequence is that of UDP-N-acetylglucosamine--N-acetylmuramyl-(pentapeptide) pyrophosphoryl-undecaprenol N-acetylglucosamine transferase from Lactococcus lactis subsp. cremoris (strain MG1363).